Here is a 121-residue protein sequence, read N- to C-terminus: Small ribosomal subunit protein uS13 (121 aa).

A disordered region spans residues 91 to 121 (HRRGLPVRGQNSKNNARTRKGPRRTVANKKK). The segment covering 106–121 (ARTRKGPRRTVANKKK) has biased composition (basic residues).

Belongs to the universal ribosomal protein uS13 family. Part of the 30S ribosomal subunit. Forms a loose heterodimer with protein S19. Forms two bridges to the 50S subunit in the 70S ribosome.

Functionally, located at the top of the head of the 30S subunit, it contacts several helices of the 16S rRNA. In the 70S ribosome it contacts the 23S rRNA (bridge B1a) and protein L5 of the 50S subunit (bridge B1b), connecting the 2 subunits; these bridges are implicated in subunit movement. Contacts the tRNAs in the A and P-sites. This Bacillus cereus (strain G9842) protein is Small ribosomal subunit protein uS13.